Consider the following 89-residue polypeptide: Progonadoliberin-1 (89 aa).

Positions methionine 1–alanine 23 are cleaved as a signal peptide. Pyrrolidone carboxylic acid is present on glutamine 24. A Glycine amide modification is found at glycine 33.

The protein belongs to the GnRH family. In terms of tissue distribution, expressed in the forebrain from larval stages.

The protein resides in the secreted. Stimulates the secretion of gonadotropins. This is Progonadoliberin-1 (gnrh1) from Xenopus laevis (African clawed frog).